The sequence spans 448 residues: Beta-glucosidase B (448 aa).

Glu167 (proton donor) is an active-site residue. The Nucleophile role is filled by Glu356.

The protein belongs to the glycosyl hydrolase 1 family.

The catalysed reaction is Hydrolysis of terminal, non-reducing beta-D-glucosyl residues with release of beta-D-glucose.. In Paenibacillus polymyxa (Bacillus polymyxa), this protein is Beta-glucosidase B (bglB).